A 347-amino-acid polypeptide reads, in one-letter code: Ferredoxin--NADP reductase 1 (347 aa).

Thr-26, Asp-45, Gln-53, Tyr-58, Val-98, Phe-133, Asp-298, and Ser-339 together coordinate FAD.

The protein belongs to the ferredoxin--NADP reductase type 2 family. Homodimer. The cofactor is FAD.

The enzyme catalyses 2 reduced [2Fe-2S]-[ferredoxin] + NADP(+) + H(+) = 2 oxidized [2Fe-2S]-[ferredoxin] + NADPH. This is Ferredoxin--NADP reductase 1 from Chloroherpeton thalassium (strain ATCC 35110 / GB-78).